The primary structure comprises 415 residues: ER-derived vesicles protein ERV46 (415 aa).

The Cytoplasmic segment spans residues 1 to 24; that stretch reads MKRSTLLSLDAFAKTEEDVRVRTR. A helical membrane pass occupies residues 25–45; it reads AGGLITLSCILTTLFLLVNEW. Residues 46–376 lie on the Lumenal side of the membrane; sequence GQFNSVVTRP…VINKEQHGQT (331 aa). Residues 377 to 397 form a helical membrane-spanning segment; that stretch reads WSGFILNCITSIGGVLAVGTV. The Cytoplasmic segment spans residues 398-415; it reads MDKLFYKAQRSIWGKKSQ. The short motif at 402–403 is the Phenylalanine-tyrosine motif element; it reads FY.

The protein belongs to the ERGIC family. Interacts with ERV41.

The protein resides in the endoplasmic reticulum membrane. It localises to the golgi apparatus membrane. Its function is as follows. Constituent of COPII-coated endoplasmic reticulum-derived transport vesicles. Required for efficient transport of a subset of secretory proteins to the Golgi. The C-terminal Phe-Tyr motif is required for exit from the endoplasmic reticulum. Facilitates retrograde transport from the Golgi to the endoplasmic reticulum. This chain is ER-derived vesicles protein ERV46 (ERV46), found in Saccharomyces cerevisiae (strain ATCC 204508 / S288c) (Baker's yeast).